The following is a 1372-amino-acid chain: DNA-directed RNA polymerase subunit beta (1372 aa).

It belongs to the RNA polymerase beta chain family. The RNAP catalytic core consists of 2 alpha, 1 beta, 1 beta' and 1 omega subunit. When a sigma factor is associated with the core the holoenzyme is formed, which can initiate transcription.

It carries out the reaction RNA(n) + a ribonucleoside 5'-triphosphate = RNA(n+1) + diphosphate. In terms of biological role, DNA-dependent RNA polymerase catalyzes the transcription of DNA into RNA using the four ribonucleoside triphosphates as substrates. The chain is DNA-directed RNA polymerase subunit beta from Nitratidesulfovibrio vulgaris (strain DSM 19637 / Miyazaki F) (Desulfovibrio vulgaris).